The sequence spans 256 residues: Thiazole synthase (256 aa).

The active-site Schiff-base intermediate with DXP is Lys102. 1-deoxy-D-xylulose 5-phosphate contacts are provided by residues Gly163, 189–190 (AG), and 211–212 (AT).

It belongs to the ThiG family. In terms of assembly, homotetramer. Forms heterodimers with either ThiH or ThiS.

The protein resides in the cytoplasm. The catalysed reaction is [ThiS sulfur-carrier protein]-C-terminal-Gly-aminoethanethioate + 2-iminoacetate + 1-deoxy-D-xylulose 5-phosphate = [ThiS sulfur-carrier protein]-C-terminal Gly-Gly + 2-[(2R,5Z)-2-carboxy-4-methylthiazol-5(2H)-ylidene]ethyl phosphate + 2 H2O + H(+). The protein operates within cofactor biosynthesis; thiamine diphosphate biosynthesis. Functionally, catalyzes the rearrangement of 1-deoxy-D-xylulose 5-phosphate (DXP) to produce the thiazole phosphate moiety of thiamine. Sulfur is provided by the thiocarboxylate moiety of the carrier protein ThiS. In vitro, sulfur can be provided by H(2)S. This chain is Thiazole synthase, found in Nocardia farcinica (strain IFM 10152).